A 174-amino-acid chain; its full sequence is Magnetosome protein MamT (174 aa).

At 1–9 the chain is on the cytoplasmic side; it reads MGTPGGGRR. A helical membrane pass occupies residues 10 to 28; sequence WMTLISITLLMVVGLGLYW. The Lumenal segment spans residues 29–174; that stretch reads DELSLSAGIS…EKKSGIKWLL (146 aa). An MCR (magnetochrome) 1 motif is present at residues 87–107; the sequence is VMPGTGMPHPYVGDCIQCHLM. Heme is bound by residues Cys-101, Cys-104, His-105, Cys-152, Cys-155, and His-156. Positions 138 to 158 match the MCR 2 motif; the sequence is ILPTTRQPHPPAGRCIKCHDI.

It belongs to the magnetosome MamT family. Heme is required as a cofactor.

It is found in the magnetosome membrane. May play a role in magnetite crystal maturation. May transfer electrons to balance the Fe(2+)-Fe(3+) ratio during magnetite formation. The chain is Magnetosome protein MamT from Magnetospirillum gryphiswaldense (strain DSM 6361 / JCM 21280 / NBRC 15271 / MSR-1).